The following is a 331-amino-acid chain: Beta-ketoacyl-[acyl-carrier-protein] synthase III (331 aa).

Residues Cys-115 and His-255 contribute to the active site. Positions 256 to 260 (QANFR) are ACP-binding. Asn-285 is an active-site residue.

It belongs to the thiolase-like superfamily. FabH family. Homodimer.

The protein localises to the cytoplasm. It catalyses the reaction malonyl-[ACP] + acetyl-CoA + H(+) = 3-oxobutanoyl-[ACP] + CO2 + CoA. It participates in lipid metabolism; fatty acid biosynthesis. Functionally, catalyzes the condensation reaction of fatty acid synthesis by the addition to an acyl acceptor of two carbons from malonyl-ACP. Catalyzes the first condensation reaction which initiates fatty acid synthesis and may therefore play a role in governing the total rate of fatty acid production. Possesses both acetoacetyl-ACP synthase and acetyl transacylase activities. Its substrate specificity determines the biosynthesis of branched-chain and/or straight-chain of fatty acids. The sequence is that of Beta-ketoacyl-[acyl-carrier-protein] synthase III from Helicobacter pylori (strain J99 / ATCC 700824) (Campylobacter pylori J99).